The primary structure comprises 415 residues: Lipoyl synthase, mitochondrial (415 aa).

The N-terminal 32 residues, 1–32 (MAASTNRLRFLYSSARTVPQTGSITPISRRTY), are a transit peptide targeting the mitochondrion. Polar residues predominate over residues 20 to 32 (QTGSITPISRRTY). The segment at 20–53 (QTGSITPISRRTYATTEPSPSATGAPATARKRTN) is disordered. Residues 33-47 (ATTEPSPSATGAPAT) are compositionally biased toward low complexity. Residues C132, C137, C143, C163, C167, C170, and S378 each contribute to the [4Fe-4S] cluster site. In terms of domain architecture, Radical SAM core spans 146-367 (GSDKSAATAT…RQRALDMGFL (222 aa)). Residues 395–415 (AAGTAGESVTDSKAAVDEATR) are disordered.

This sequence belongs to the radical SAM superfamily. Lipoyl synthase family. [4Fe-4S] cluster is required as a cofactor.

It is found in the mitochondrion. It catalyses the reaction [[Fe-S] cluster scaffold protein carrying a second [4Fe-4S](2+) cluster] + N(6)-octanoyl-L-lysyl-[protein] + 2 oxidized [2Fe-2S]-[ferredoxin] + 2 S-adenosyl-L-methionine + 4 H(+) = [[Fe-S] cluster scaffold protein] + N(6)-[(R)-dihydrolipoyl]-L-lysyl-[protein] + 4 Fe(3+) + 2 hydrogen sulfide + 2 5'-deoxyadenosine + 2 L-methionine + 2 reduced [2Fe-2S]-[ferredoxin]. It participates in protein modification; protein lipoylation via endogenous pathway; protein N(6)-(lipoyl)lysine from octanoyl-[acyl-carrier-protein]: step 2/2. Its function is as follows. Catalyzes the radical-mediated insertion of two sulfur atoms into the C-6 and C-8 positions of the octanoyl moiety bound to the lipoyl domains of lipoate-dependent enzymes, thereby converting the octanoylated domains into lipoylated derivatives. This is Lipoyl synthase, mitochondrial from Aspergillus flavus (strain ATCC 200026 / FGSC A1120 / IAM 13836 / NRRL 3357 / JCM 12722 / SRRC 167).